Consider the following 376-residue polypeptide: Chaperone protein DnaJ (376 aa).

One can recognise a J domain in the interval 5 to 69 (DYYEVLGISK…QKRAQYDQYG (65 aa)). The CR-type zinc finger occupies 133 to 215 (GKDAEIEIPR…CHGKGRVTKT (83 aa)). Zn(2+)-binding residues include C146, C149, C163, C166, C189, C192, C203, and C206. CXXCXGXG motif repeat units lie at residues 146-153 (CDTCHGSG), 163-170 (CSHCGGKG), 189-196 (CQYCNGTG), and 203-210 (CSTCHGKG).

This sequence belongs to the DnaJ family. In terms of assembly, homodimer. Zn(2+) is required as a cofactor.

The protein localises to the cytoplasm. Its function is as follows. Participates actively in the response to hyperosmotic and heat shock by preventing the aggregation of stress-denatured proteins and by disaggregating proteins, also in an autonomous, DnaK-independent fashion. Unfolded proteins bind initially to DnaJ; upon interaction with the DnaJ-bound protein, DnaK hydrolyzes its bound ATP, resulting in the formation of a stable complex. GrpE releases ADP from DnaK; ATP binding to DnaK triggers the release of the substrate protein, thus completing the reaction cycle. Several rounds of ATP-dependent interactions between DnaJ, DnaK and GrpE are required for fully efficient folding. Also involved, together with DnaK and GrpE, in the DNA replication of plasmids through activation of initiation proteins. The chain is Chaperone protein DnaJ from Listeria welshimeri serovar 6b (strain ATCC 35897 / DSM 20650 / CCUG 15529 / CIP 8149 / NCTC 11857 / SLCC 5334 / V8).